Reading from the N-terminus, the 520-residue chain is Nucleobase-ascorbate transporter 1 (520 aa).

Helical transmembrane passes span 36 to 56 (YILM…AMGG), 64 to 84 (VIQT…LFGT), 86 to 106 (LPAV…IIND), 129 to 149 (ALIV…WGLF), 150 to 170 (SRFF…LGMF), 174 to 194 (FPQL…VIGL), 213 to 233 (FPIL…TASG), 279 to 299 (FAMM…YIAA), 362 to 382 (GFMI…SIPV), 384 to 404 (IYAA…LSFL), 415 to 435 (LMIT…FAQY), and 453 to 473 (AFLN…AVFM).

It belongs to the nucleobase:cation symporter-2 (NCS2) (TC 2.A.40) family. As to expression, expressed in cotyledons 4 days after imbibition (DAI). Expressed in the minor and major veins of cotyledons and leaves, in the shoot apex and pedicels. Expressed in the root meristems, root tips and lateral root primordia.

Its subcellular location is the membrane. The polypeptide is Nucleobase-ascorbate transporter 1 (NAT1) (Arabidopsis thaliana (Mouse-ear cress)).